The primary structure comprises 184 residues: Phosphopantetheine adenylyltransferase (184 aa).

Substrate is bound at residue Ser-8. Residues 8–9 and His-16 each bind ATP; that span reads SF. 3 residues coordinate substrate: Lys-40, Leu-74, and Arg-88. Residues 89–91, Glu-99, and 123–129 contribute to the ATP site; these read GLR and WSFVSST.

The protein belongs to the bacterial CoaD family. Homohexamer. Mg(2+) serves as cofactor.

Its subcellular location is the cytoplasm. The enzyme catalyses (R)-4'-phosphopantetheine + ATP + H(+) = 3'-dephospho-CoA + diphosphate. It functions in the pathway cofactor biosynthesis; coenzyme A biosynthesis; CoA from (R)-pantothenate: step 4/5. In terms of biological role, reversibly transfers an adenylyl group from ATP to 4'-phosphopantetheine, yielding dephospho-CoA (dPCoA) and pyrophosphate. The protein is Phosphopantetheine adenylyltransferase of Deinococcus geothermalis (strain DSM 11300 / CIP 105573 / AG-3a).